Reading from the N-terminus, the 591-residue chain is Aspartate--tRNA ligase (591 aa).

Glutamate 173 provides a ligand contact to L-aspartate. Residues 197 to 200 form an aspartate region; that stretch reads QLFK. Arginine 219 lines the L-aspartate pocket. Residues 219-221 and glutamine 228 contribute to the ATP site; that span reads RDE. An L-aspartate-binding site is contributed by histidine 448. Glutamate 482 lines the ATP pocket. Arginine 489 lines the L-aspartate pocket. 534–537 lines the ATP pocket; that stretch reads GLDR.

The protein belongs to the class-II aminoacyl-tRNA synthetase family. Type 1 subfamily. Homodimer.

Its subcellular location is the cytoplasm. It catalyses the reaction tRNA(Asp) + L-aspartate + ATP = L-aspartyl-tRNA(Asp) + AMP + diphosphate. Its function is as follows. Catalyzes the attachment of L-aspartate to tRNA(Asp) in a two-step reaction: L-aspartate is first activated by ATP to form Asp-AMP and then transferred to the acceptor end of tRNA(Asp). The polypeptide is Aspartate--tRNA ligase (Shewanella sp. (strain MR-7)).